The chain runs to 294 residues: Ethanolamine ammonia-lyase small subunit (294 aa).

Positions 207 and 228 each coordinate adenosylcob(III)alamin.

This sequence belongs to the EutC family. In terms of assembly, the basic unit is a heterodimer which dimerizes to form tetramers. The heterotetramers trimerize; 6 large subunits form a core ring with 6 small subunits projecting outwards. The cofactor is adenosylcob(III)alamin.

The protein localises to the bacterial microcompartment. The enzyme catalyses ethanolamine = acetaldehyde + NH4(+). The protein operates within amine and polyamine degradation; ethanolamine degradation. Functionally, catalyzes the deamination of various vicinal amino-alcohols to oxo compounds. Allows this organism to utilize ethanolamine as the sole source of nitrogen and carbon in the presence of external vitamin B12. The sequence is that of Ethanolamine ammonia-lyase small subunit from Clostridium tetani (strain Massachusetts / E88).